A 266-amino-acid chain; its full sequence is Putative carbamate hydrolase RutD (266 aa).

It belongs to the AB hydrolase superfamily. Hydrolase RutD family.

The catalysed reaction is carbamate + 2 H(+) = NH4(+) + CO2. Functionally, involved in pyrimidine catabolism. May facilitate the hydrolysis of carbamate, a reaction that can also occur spontaneously. This is Putative carbamate hydrolase RutD from Acinetobacter baylyi (strain ATCC 33305 / BD413 / ADP1).